A 509-amino-acid polypeptide reads, in one-letter code: Putative (R)-citramalate synthase CimA (509 aa).

The region spanning 14–267 is the Pyruvate carboxyltransferase domain; it reads VRIFDTTLRD…DTGIRTERLT (254 aa).

This sequence belongs to the alpha-IPM synthase/homocitrate synthase family. As to quaternary structure, homodimer.

The enzyme catalyses pyruvate + acetyl-CoA + H2O = (3R)-citramalate + CoA + H(+). It participates in amino-acid biosynthesis; L-isoleucine biosynthesis; 2-oxobutanoate from pyruvate: step 1/3. In terms of biological role, catalyzes the condensation of pyruvate and acetyl-coenzyme A to form (R)-citramalate. The protein is Putative (R)-citramalate synthase CimA (cimA) of Methanopyrus kandleri (strain AV19 / DSM 6324 / JCM 9639 / NBRC 100938).